Reading from the N-terminus, the 1165-residue chain is MFELNNFDSIRIGLASPEKIREWSRGEVKKPETINYRTLKPERDGLFCERIFGPQKDWECHCGKYKRIRYKGIVCDRCGVEVTRSKVRRERMGHIELAAPVSHIWYFKGIPSRMGLLLDMSPRALEKILYFAAYVVIDPGQTPLSKKQILSEKEYRDSLEKFGPKFRAGMGAEAVRELLQEINLDELSAELREEIKQSTGQKRVRAIKRLEVVEAFRQSQNKPEWMILDVIPVIPPELRPMVQLDGGRFATSDLNDLYRRVINRNNRLKRLLDLGAPDIIVRNEKRMLQEAVDALIDNGRRGRPVTGPGNRPLKSLSDMLKGKQGRFRQNLLGKRVDYSGRSVIVVGPELKIYQCGLPKEMALELFKPFVMKKLVNDGLAHNIKSAKRMVERVRNEVWDVLEEVIKEHPVLLNRAPTLHRLGIQAFEPVLVEGRALKLHPLVCTAYNADFDGDQMAVHVPLSAEAQAEARFLMLSANNLLKPQDGKPVAVPTQDMVLGSYYLTILKEGAKGEGRVFTSMDEAVMAYDNGEIELHSKIKVRMKRVVDGVEKSKIIETTLGRLIFNEAIPQDLGFVDRSDPDKIFDLEVDFLVGKNELKKIIDKSIKVHGTTKTAILLDKIKELGFKYSTKGAITISISDMVIPEVKAKYIKETEEKIEKITKQYKRGLISDEERYNSVIAAWTEASENITRALINNLDRFNPVYMMSQSGARGNINQIKQLAGMRGLMADTSGKTIEFPIKANFREGLTVMEFFISTHGARKGLADTALRTADSGYLTRRLVDVSQDVIVRETDCGTRKGIEVTDIKDGNEVIEELSERIIGRYPVGNIVHPETGEIIVEAGRMITDQDAEKIVKAGIKKVRIRSVLTCHSEYGVCAKCYGANLATGEECNVGEAVGIIAAQSIGEPGTQLTMRTFHTGGVAGEDITQGLPRVEELFEARKPKGLAIISEIKGTVKISETKKKREIVVTSEDGETRSYLIPYGSRIKVSDGDQVEAGDELTEGSVNPHDILKIKGVEAVQTYLVHEVQKVYRMQGVDINDKHIEVIVRQMLRKVKVEDPGDTSLLPGGLVDVFDFEEENAKAIAEGKKPAVAKRALLGITKAALATDSFLSAASFQETTRVLTEAAIKGKVDPLVGLKENVIIGKLIPAGTGMSRYKDITISTVTE.

Cys60, Cys62, Cys75, and Cys78 together coordinate Zn(2+). 3 residues coordinate Mg(2+): Asp449, Asp451, and Asp453. Zn(2+)-binding residues include Cys794, Cys868, Cys875, and Cys878.

This sequence belongs to the RNA polymerase beta' chain family. The RNAP catalytic core consists of 2 alpha, 1 beta, 1 beta' and 1 omega subunit. When a sigma factor is associated with the core the holoenzyme is formed, which can initiate transcription. It depends on Mg(2+) as a cofactor. Zn(2+) is required as a cofactor.

The catalysed reaction is RNA(n) + a ribonucleoside 5'-triphosphate = RNA(n+1) + diphosphate. Its function is as follows. DNA-dependent RNA polymerase catalyzes the transcription of DNA into RNA using the four ribonucleoside triphosphates as substrates. The chain is DNA-directed RNA polymerase subunit beta' from Acetivibrio thermocellus (strain ATCC 27405 / DSM 1237 / JCM 9322 / NBRC 103400 / NCIMB 10682 / NRRL B-4536 / VPI 7372) (Clostridium thermocellum).